The chain runs to 796 residues: DNA damage-responsive transcriptional repressor RPH1 (796 aa).

Residues 14–55 enclose the JmjN domain; that stretch reads VPVFKPTYEQFEDFYAYCKAINKYGMKSGVVKVIPPKEWKDK. The 163-residue stretch at 193–355 folds into the JmjC domain; sequence PEGLNVWNVA…IGKKAGKCHC (163 aa). Threonine 399 is subject to Phosphothreonine. Serine 430, serine 459, serine 557, serine 561, serine 575, and serine 584 each carry phosphoserine. The Bipartite nuclear localization signal motif lies at 455-471; it reads KRISSFQEQPLNKLLKR. Residues 599 to 692 form a disordered region; that stretch reads RQQHSQQHSF…DKEQGSSPLN (94 aa). A compositionally biased stretch (polar residues) spans 601 to 621; sequence QHSQQHSFSTPSTVSNLSTSV. The span at 629–640 shows a compositional bias: basic and acidic residues; it reads NDIKTPHPERPN. The residue at position 652 (serine 652) is a Phosphoserine. Positions 654 to 669 are enriched in polar residues; sequence VETSKSNLILSKVAST. Positions 670-686 are enriched in basic and acidic residues; that stretch reads RQEDSFTSRNDDLDKEQ. Residue serine 689 is modified to Phosphoserine. The C2H2-type 1 zinc-finger motif lies at 709-732; sequence YICKECQRKFSSGHHLTRHKKSVH. Residues 738-763 form a C2H2-type 2; atypical zinc finger; sequence HSCPKCGKRFKRRDHVLQHLNKKIPC. The segment at 774–796 is disordered; it reads IMNPTVQPQDGKAAINQQSTPLN.

Post-translationally, RAD53-dependent phosphorylated in response to DNA damage.

Its subcellular location is the nucleus. Its function is as follows. Transcriptional repressor of photolyase PHR1. Recognizes and binds the sequence AG(4) in the upstream repressing sequence of PHR1. Derepresses PHR1 transcription when phosphorylated. This Saccharomyces cerevisiae (strain ATCC 204508 / S288c) (Baker's yeast) protein is DNA damage-responsive transcriptional repressor RPH1 (RPH1).